The sequence spans 330 residues: DNA-directed RNA polymerase subunit alpha (330 aa).

Positions 1–235 (MVREKVKVST…DLFIHFLHAK (235 aa)) are alpha N-terminal domain (alpha-NTD). The tract at residues 270–330 (IALKYIFIDQ…KQILGILEKK (61 aa)) is alpha C-terminal domain (alpha-CTD).

It belongs to the RNA polymerase alpha chain family. As to quaternary structure, in plastids the minimal PEP RNA polymerase catalytic core is composed of four subunits: alpha, beta, beta', and beta''. When a (nuclear-encoded) sigma factor is associated with the core the holoenzyme is formed, which can initiate transcription.

It localises to the plastid. The protein resides in the chloroplast. The catalysed reaction is RNA(n) + a ribonucleoside 5'-triphosphate = RNA(n+1) + diphosphate. Its function is as follows. DNA-dependent RNA polymerase catalyzes the transcription of DNA into RNA using the four ribonucleoside triphosphates as substrates. The sequence is that of DNA-directed RNA polymerase subunit alpha (rpoA) from Gossypium barbadense (Sea Island cotton).